Here is a 364-residue protein sequence, read N- to C-terminus: tRNA 2-selenouridine synthase (364 aa).

Residues 14 to 137 (LLADTPLIDV…LRQTAIQATW (124 aa)) form the Rhodanese domain. Catalysis depends on cysteine 97, which acts as the S-selanylcysteine intermediate.

It belongs to the SelU family. In terms of assembly, monomer.

It carries out the reaction 5-methylaminomethyl-2-thiouridine(34) in tRNA + selenophosphate + (2E)-geranyl diphosphate + H2O + H(+) = 5-methylaminomethyl-2-selenouridine(34) in tRNA + (2E)-thiogeraniol + phosphate + diphosphate. It catalyses the reaction 5-methylaminomethyl-2-thiouridine(34) in tRNA + (2E)-geranyl diphosphate = 5-methylaminomethyl-S-(2E)-geranyl-thiouridine(34) in tRNA + diphosphate. The catalysed reaction is 5-methylaminomethyl-S-(2E)-geranyl-thiouridine(34) in tRNA + selenophosphate + H(+) = 5-methylaminomethyl-2-(Se-phospho)selenouridine(34) in tRNA + (2E)-thiogeraniol. The enzyme catalyses 5-methylaminomethyl-2-(Se-phospho)selenouridine(34) in tRNA + H2O = 5-methylaminomethyl-2-selenouridine(34) in tRNA + phosphate. Functionally, involved in the post-transcriptional modification of the uridine at the wobble position (U34) of tRNA(Lys), tRNA(Glu) and tRNA(Gln). Catalyzes the conversion of 2-thiouridine (S2U-RNA) to 2-selenouridine (Se2U-RNA). Acts in a two-step process involving geranylation of 2-thiouridine (S2U) to S-geranyl-2-thiouridine (geS2U) and subsequent selenation of the latter derivative to 2-selenouridine (Se2U) in the tRNA chain. The sequence is that of tRNA 2-selenouridine synthase from Salmonella paratyphi B (strain ATCC BAA-1250 / SPB7).